A 142-amino-acid chain; its full sequence is Hemoglobin subunit alpha-A (142 aa).

One can recognise a Globin domain in the interval 2 to 142; it reads VLSAADKTNV…VGAVLTAKYR (141 aa). Histidine 59 contributes to the O2 binding site. Position 88 (histidine 88) interacts with heme b.

This sequence belongs to the globin family. In terms of assembly, heterotetramer of two alpha chains and two beta chains. As to expression, red blood cells.

In terms of biological role, involved in oxygen transport from the lung to the various peripheral tissues. This Cairina moschata (Muscovy duck) protein is Hemoglobin subunit alpha-A (HBAA).